The primary structure comprises 878 residues: Protein translocase subunit SecA (878 aa).

ATP contacts are provided by residues Q81, G99 to T103, and D489.

Belongs to the SecA family.

It is found in the plastid. The protein localises to the chloroplast stroma. It localises to the chloroplast thylakoid membrane. It catalyses the reaction ATP + H2O + cellular proteinSide 1 = ADP + phosphate + cellular proteinSide 2.. Has a central role in coupling the hydrolysis of ATP to the transfer of proteins across the thylakoid membrane. The protein is Protein translocase subunit SecA of Thalassiosira pseudonana (Marine diatom).